A 473-amino-acid polypeptide reads, in one-letter code: H(+)/Cl(-) exchange transporter ClcA (473 aa).

Residues 1 to 32 (MKTDTPSLETPQAARLRRRQLIRQLLERDKTP) are Cytoplasmic-facing. Residues 33-69 (LAILFMAAVVGTLVGLAAVAFDKGVAWLQNQRMGALV) form a helical membrane-spanning segment. At 70–76 (HTADNYP) the chain is on the periplasmic side. Residues 77 to 100 (LLLTVAFLCSAVLAMFGYFLVRKY) traverse the membrane as a helical segment. Positions 106–110 (GSGIP) match the Selectivity filter part_1 motif. Ser107 is a chloride binding site. The helical intramembrane region spans 109–116 (IPEIEGAL). Residues 117–123 (EDQRPVR) are Cytoplasmic-facing. The next 2 helical transmembrane spans lie at 124-141 (WWRV…TLGG) and 148-166 (EGPT…LDVF). Positions 146–150 (GREGP) match the Selectivity filter part_2 motif. Residues 167 to 176 (RLKGDEARHT) lie on the Cytoplasmic side of the membrane. 2 intramembrane regions (helical) span residues 177–189 (LLAT…LAAA) and 193–201 (PLAGILFII). At 202-214 (EEMRPQFRYTLIS) the chain is on the cytoplasmic side. A helical membrane pass occupies residues 215-232 (IKAVFIGVIMSTIMYRIF). Topologically, residues 233-252 (NHEVALIDVGKLSDAPLNTL) are periplasmic. A helical membrane pass occupies residues 253–281 (WLYLILGIIFGIFGPIFNKWVLGMQDLLH). Residues 282 to 287 (RVHGGN) are Cytoplasmic-facing. A helical transmembrane segment spans residues 288 to 309 (ITKWVLMGGAIGGLCGLLGFVA). The Periplasmic portion of the chain corresponds to 310 to 329 (PATSGGGFNLIPIATAGNFS). 2 consecutive transmembrane segments (helical) span residues 330–349 (MGML…LCFS) and 355–376 (GIFA…MVAV). The short motif at 355–359 (GIFAP) is the Selectivity filter part_3 element. Positions 356 and 357 each coordinate chloride. Topologically, residues 377 to 386 (ELFPQYHLEA) are periplasmic. The segment at residues 387–401 (GTFAIAGMGALLAAS) is an intramembrane region (helical). An intramembrane region (note=Loop between two helices) is located at residues 402–404 (IRA). Positions 405 to 416 (PLTGIILVLEMT) form an intramembrane region, helical. The segment at residues 417 to 421 (DNYQL) is an intramembrane region (note=Loop between two helices). A helical membrane pass occupies residues 422–438 (ILPMIITGLGATLLAQF). Residues 439–473 (TGGKPLYSAILARTLAKQEAEQLARSKAASARENT) are Cytoplasmic-facing. Residue Tyr445 coordinates chloride.

This sequence belongs to the chloride channel (TC 2.A.49) family. ClcA subfamily. As to quaternary structure, homodimer.

Its subcellular location is the cell inner membrane. It catalyses the reaction 2 chloride(in) + H(+)(out) = 2 chloride(out) + H(+)(in). In terms of biological role, proton-coupled chloride transporter. Functions as antiport system and exchanges two chloride ions for 1 proton. Probably acts as an electrical shunt for an outwardly-directed proton pump that is linked to amino acid decarboxylation, as part of the extreme acid resistance (XAR) response. This chain is H(+)/Cl(-) exchange transporter ClcA, found in Escherichia coli O45:K1 (strain S88 / ExPEC).